We begin with the raw amino-acid sequence, 265 residues long: Shikimate dehydrogenase (NADP(+)) (265 aa).

Shikimate contacts are provided by residues 15-17 and threonine 62; that span reads SLS. Lysine 66 acts as the Proton acceptor in catalysis. Asparagine 87 and aspartate 102 together coordinate shikimate. Residues 125–129, 149–154, and leucine 209 each bind NADP(+); these read GAGGA and NRTLEK. Tyrosine 211 is a shikimate binding site. Glycine 233 serves as a coordination point for NADP(+).

This sequence belongs to the shikimate dehydrogenase family. As to quaternary structure, homodimer.

The enzyme catalyses shikimate + NADP(+) = 3-dehydroshikimate + NADPH + H(+). Its pathway is metabolic intermediate biosynthesis; chorismate biosynthesis; chorismate from D-erythrose 4-phosphate and phosphoenolpyruvate: step 4/7. Its function is as follows. Involved in the biosynthesis of the chorismate, which leads to the biosynthesis of aromatic amino acids. Catalyzes the reversible NADPH linked reduction of 3-dehydroshikimate (DHSA) to yield shikimate (SA). In Legionella pneumophila (strain Lens), this protein is Shikimate dehydrogenase (NADP(+)).